A 64-amino-acid chain; its full sequence is Conotoxin Im11.1 (64 aa).

An N-terminal signal peptide occupies residues 1 to 26 (MMFRLTSVSCFLLVIACLNLVVLTNA). Cystine bridges form between Cys-27–Cys-41, Cys-34–Cys-46, Cys-40–Cys-50, and Cys-45–Cys-54. An Asparagine amide modification is found at Asn-57. A propeptide spanning residues 61 to 64 (ATFQ) is cleaved from the precursor.

It belongs to the conotoxin I2 superfamily. Expressed by the venom duct.

Its subcellular location is the secreted. This chain is Conotoxin Im11.1, found in Conus imperialis (Imperial cone).